A 431-amino-acid chain; its full sequence is Enolase (431 aa).

(2R)-2-phosphoglycerate is bound at residue Q166. E208 functions as the Proton donor in the catalytic mechanism. Mg(2+)-binding residues include D245, E288, and D315. 4 residues coordinate (2R)-2-phosphoglycerate: K340, R369, S370, and K391. Catalysis depends on K340, which acts as the Proton acceptor.

It belongs to the enolase family. Mg(2+) serves as cofactor.

It localises to the cytoplasm. The protein resides in the secreted. Its subcellular location is the cell surface. It carries out the reaction (2R)-2-phosphoglycerate = phosphoenolpyruvate + H2O. Its pathway is carbohydrate degradation; glycolysis; pyruvate from D-glyceraldehyde 3-phosphate: step 4/5. Functionally, catalyzes the reversible conversion of 2-phosphoglycerate (2-PG) into phosphoenolpyruvate (PEP). It is essential for the degradation of carbohydrates via glycolysis. The sequence is that of Enolase from Clostridium perfringens (strain 13 / Type A).